Reading from the N-terminus, the 427-residue chain is Serine hydroxymethyltransferase (427 aa).

A (6S)-5,6,7,8-tetrahydrofolate-binding site is contributed by 120 to 122; it reads GHI. At K226 the chain carries N6-(pyridoxal phosphate)lysine.

Belongs to the SHMT family. As to quaternary structure, homodimer. Pyridoxal 5'-phosphate is required as a cofactor.

It is found in the cytoplasm. It functions in the pathway amino-acid biosynthesis; glycine biosynthesis; glycine from L-serine: step 1/1. Its function is as follows. Catalyzes the reversible interconversion of serine and glycine with a modified folate serving as the one-carbon carrier. Also exhibits a pteridine-independent aldolase activity toward beta-hydroxyamino acids, producing glycine and aldehydes, via a retro-aldol mechanism. This chain is Serine hydroxymethyltransferase, found in Pyrococcus furiosus (strain ATCC 43587 / DSM 3638 / JCM 8422 / Vc1).